The following is a 149-amino-acid chain: Calmodulin-2 (149 aa).

Position 2 is an N-acetylalanine (Ala2). 4 EF-hand domains span residues 8–43 (EQIAEFKEAFSLFDKDGDGTITTKELGTVMRSLGQN), 44–79 (PTEAELQDMINEVDADGNGTIDFPEFLTMMARKMKD), 81–116 (DSEEEIREAFRVFDKDGNGFISAAELRHVMTNLGEK), and 117–149 (LTDEEVDEMVREADIDGDGQVNYEEFVEMMTSK). Ca(2+) contacts are provided by Asp21, Asp23, Asp25, Thr27, Glu32, Asp57, Asp59, Asn61, Thr63, Glu68, Asp94, Asp96, Asn98, and Glu105. Lys116 bears the N6,N6,N6-trimethyllysine mark. Ca(2+) contacts are provided by Asp130, Asp132, Asp134, Gln136, and Glu141.

The protein belongs to the calmodulin family.

In terms of biological role, calmodulin mediates the control of a large number of enzymes, ion channels and other proteins by Ca(2+). Among the enzymes to be stimulated by the calmodulin-Ca(2+) complex are a number of protein kinases and phosphatases. This chain is Calmodulin-2 (CAM2), found in Branchiostoma lanceolatum (Common lancelet).